Here is a 429-residue protein sequence, read N- to C-terminus: Glutamate-1-semialdehyde 2,1-aminomutase (429 aa).

Lys267 bears the N6-(pyridoxal phosphate)lysine mark.

This sequence belongs to the class-III pyridoxal-phosphate-dependent aminotransferase family. HemL subfamily. In terms of assembly, homodimer. The cofactor is pyridoxal 5'-phosphate.

The protein resides in the cytoplasm. The enzyme catalyses (S)-4-amino-5-oxopentanoate = 5-aminolevulinate. It functions in the pathway porphyrin-containing compound metabolism; protoporphyrin-IX biosynthesis; 5-aminolevulinate from L-glutamyl-tRNA(Glu): step 2/2. The chain is Glutamate-1-semialdehyde 2,1-aminomutase from Xanthomonas axonopodis pv. citri (strain 306).